The following is a 351-amino-acid chain: Apolipoprotein L4 (351 aa).

Residues 1-21 form the signal peptide; that stretch reads MEGAALLKIFVVCIWVQQNHP.

The protein belongs to the apolipoprotein L family. In terms of tissue distribution, widely expressed; the highest levels are in spinal cord, placenta, adrenal gland; also detected in spleen, bone marrow, uterus, trachea, mammary gland and testis; levels are low in brain, heart and pancreas.

It localises to the secreted. Functionally, may play a role in lipid exchange and transport throughout the body. May participate in reverse cholesterol transport from peripheral cells to the liver. In Homo sapiens (Human), this protein is Apolipoprotein L4 (APOL4).